A 381-amino-acid chain; its full sequence is Carboxylesterase 5A (381 aa).

S108 (acyl-ester intermediate) is an active-site residue. C162 and C173 are disulfide-bonded. N163 carries N-linked (GlcNAc...) asparagine glycosylation. The active-site Charge relay system is the E227. N245 carries an N-linked (GlcNAc...) asparagine glycan. H336 (charge relay system) is an active-site residue.

This sequence belongs to the type-B carboxylesterase/lipase family. In terms of assembly, component of a epididymal complex at least composed of soluble form of prion protein PRNP, CLU, BPI, CES5A, MANBA and GLB1. In terms of processing, N-glycosylated. As to expression, detected in corpus and cauda epididymal fluid. Present in seminal fluid but not found to be associated with sperm (at protein level). Not expressed in other tissues.

Its subcellular location is the secreted. The enzyme catalyses a carboxylic ester + H2O = an alcohol + a carboxylate + H(+). Involved in the detoxification of xenobiotics and in the activation of ester and amide prodrugs. This Ovis aries (Sheep) protein is Carboxylesterase 5A (CES5A).